The primary structure comprises 549 residues: Glucose-6-phosphate isomerase (549 aa).

The Proton donor role is filled by E355. Catalysis depends on residues H387 and K515.

This sequence belongs to the GPI family.

Its subcellular location is the cytoplasm. The catalysed reaction is alpha-D-glucose 6-phosphate = beta-D-fructose 6-phosphate. The protein operates within carbohydrate biosynthesis; gluconeogenesis. Its pathway is carbohydrate degradation; glycolysis; D-glyceraldehyde 3-phosphate and glycerone phosphate from D-glucose: step 2/4. Its function is as follows. Catalyzes the reversible isomerization of glucose-6-phosphate to fructose-6-phosphate. In Haemophilus influenzae (strain PittGG), this protein is Glucose-6-phosphate isomerase.